The primary structure comprises 199 residues: Recombination protein RecR (199 aa).

The C4-type zinc finger occupies 58-73; that stretch reads CSTCNNLTDKDPCTIC. The region spanning 81-176 is the Toprim domain; it reads NLICVVQDAR…RVTRLAYGLP (96 aa).

Belongs to the RecR family.

Functionally, may play a role in DNA repair. It seems to be involved in an RecBC-independent recombinational process of DNA repair. It may act with RecF and RecO. The protein is Recombination protein RecR of Natranaerobius thermophilus (strain ATCC BAA-1301 / DSM 18059 / JW/NM-WN-LF).